The sequence spans 346 residues: tRNA N6-adenosine threonylcarbamoyltransferase (346 aa).

Fe cation-binding residues include histidine 111 and histidine 115. Substrate is bound by residues 134 to 138 (LVSGG), aspartate 167, glycine 180, and asparagine 277. Position 305 (aspartate 305) interacts with Fe cation.

The protein belongs to the KAE1 / TsaD family. Requires Fe(2+) as cofactor.

The protein localises to the cytoplasm. It catalyses the reaction L-threonylcarbamoyladenylate + adenosine(37) in tRNA = N(6)-L-threonylcarbamoyladenosine(37) in tRNA + AMP + H(+). In terms of biological role, required for the formation of a threonylcarbamoyl group on adenosine at position 37 (t(6)A37) in tRNAs that read codons beginning with adenine. Is involved in the transfer of the threonylcarbamoyl moiety of threonylcarbamoyl-AMP (TC-AMP) to the N6 group of A37, together with TsaE and TsaB. TsaD likely plays a direct catalytic role in this reaction. The sequence is that of tRNA N6-adenosine threonylcarbamoyltransferase from Bordetella pertussis (strain Tohama I / ATCC BAA-589 / NCTC 13251).